The sequence spans 378 residues: Fructose-1,6-bisphosphatase class 1 2 (378 aa).

Mg(2+) is bound by residues Glu-98, Asp-120, Leu-122, and Asp-123. Substrate is bound by residues 123-126 and Asn-227; that span reads DGSS. Residue Glu-299 coordinates Mg(2+).

The protein belongs to the FBPase class 1 family. As to quaternary structure, homotetramer. Mg(2+) serves as cofactor.

It localises to the cytoplasm. It carries out the reaction beta-D-fructose 1,6-bisphosphate + H2O = beta-D-fructose 6-phosphate + phosphate. It participates in carbohydrate biosynthesis; gluconeogenesis. The protein is Fructose-1,6-bisphosphatase class 1 2 of Paraburkholderia xenovorans (strain LB400).